Reading from the N-terminus, the 92-residue chain is Small ribosomal subunit protein uS19 (92 aa).

This sequence belongs to the universal ribosomal protein uS19 family.

In terms of biological role, protein S19 forms a complex with S13 that binds strongly to the 16S ribosomal RNA. The protein is Small ribosomal subunit protein uS19 of Leuconostoc mesenteroides subsp. mesenteroides (strain ATCC 8293 / DSM 20343 / BCRC 11652 / CCM 1803 / JCM 6124 / NCDO 523 / NBRC 100496 / NCIMB 8023 / NCTC 12954 / NRRL B-1118 / 37Y).